We begin with the raw amino-acid sequence, 249 residues long: ATP synthase subunit a (249 aa).

Helical transmembrane passes span F26–L46, F84–F104, I114–F134, L143–I163, I185–I205, and T208–L228.

Belongs to the ATPase A chain family. F-type ATPases have 2 components, CF(1) - the catalytic core - and CF(0) - the membrane proton channel. CF(1) has five subunits: alpha(3), beta(3), gamma(1), delta(1), epsilon(1). CF(0) has three main subunits: a(1), b(2) and c(9-12). The alpha and beta chains form an alternating ring which encloses part of the gamma chain. CF(1) is attached to CF(0) by a central stalk formed by the gamma and epsilon chains, while a peripheral stalk is formed by the delta and b chains.

Its subcellular location is the cell inner membrane. Functionally, key component of the proton channel; it plays a direct role in the translocation of protons across the membrane. In Brucella ovis (strain ATCC 25840 / 63/290 / NCTC 10512), this protein is ATP synthase subunit a.